The primary structure comprises 532 residues: Phosphoribosylamine--glycine ligase, chloroplastic (532 aa).

A chloroplast-targeting transit peptide spans 1–75; sequence MSSLCASNCY…IQRRLFLLRC (75 aa). Residues 204–412 enclose the ATP-grasp domain; the sequence is KNLCHKYNIP…LAKVLLAACK (209 aa).

Belongs to the GARS family.

It is found in the plastid. The protein localises to the chloroplast. It catalyses the reaction 5-phospho-beta-D-ribosylamine + glycine + ATP = N(1)-(5-phospho-beta-D-ribosyl)glycinamide + ADP + phosphate + H(+). The protein operates within purine metabolism; IMP biosynthesis via de novo pathway; N(1)-(5-phospho-D-ribosyl)glycinamide from 5-phospho-alpha-D-ribose 1-diphosphate: step 2/2. The protein is Phosphoribosylamine--glycine ligase, chloroplastic (PUR2) of Arabidopsis thaliana (Mouse-ear cress).